We begin with the raw amino-acid sequence, 285 residues long: Elongation factor Ts (285 aa).

Residues 84–87 (TDFV) form an involved in Mg(2+) ion dislocation from EF-Tu region.

The protein belongs to the EF-Ts family.

The protein resides in the cytoplasm. Its function is as follows. Associates with the EF-Tu.GDP complex and induces the exchange of GDP to GTP. It remains bound to the aminoacyl-tRNA.EF-Tu.GTP complex up to the GTP hydrolysis stage on the ribosome. This is Elongation factor Ts from Bifidobacterium animalis subsp. lactis (strain AD011).